The following is a 316-amino-acid chain: Glutathione synthetase (316 aa).

The 186-residue stretch at 125–310 (KLFTAWFSDL…ITGMLMDAIE (186 aa)) folds into the ATP-grasp domain. 151–207 (WEKHSDIILKPLDGMGGASIFRVKEGDPNLGVIAETLTEHGTRYCMAQNYLPAIKDG) contributes to the ATP binding site. Mg(2+)-binding residues include glutamate 281 and asparagine 283.

This sequence belongs to the prokaryotic GSH synthase family. The cofactor is Mg(2+). It depends on Mn(2+) as a cofactor.

The catalysed reaction is gamma-L-glutamyl-L-cysteine + glycine + ATP = glutathione + ADP + phosphate + H(+). It functions in the pathway sulfur metabolism; glutathione biosynthesis; glutathione from L-cysteine and L-glutamate: step 2/2. The protein is Glutathione synthetase of Escherichia coli O6:H1 (strain CFT073 / ATCC 700928 / UPEC).